A 736-amino-acid chain; its full sequence is Probable methionine--tRNA ligase, cytoplasmic (736 aa).

The 'HIGH' region motif lies at 25–35 (PYVNNVPHLGN). Residues 346-350 (KFSKS) carry the 'KMSKS' region motif. ATP is bound at residue K349. The region spanning 573–680 (PEFPIDMKIA…QSIEAGSKIA (108 aa)) is the tRNA-binding domain.

This sequence belongs to the class-I aminoacyl-tRNA synthetase family.

The protein resides in the cytoplasm. It carries out the reaction tRNA(Met) + L-methionine + ATP = L-methionyl-tRNA(Met) + AMP + diphosphate. In Dictyostelium discoideum (Social amoeba), this protein is Probable methionine--tRNA ligase, cytoplasmic (metS).